A 500-amino-acid polypeptide reads, in one-letter code: L-arabinose isomerase (500 aa).

Residues E306, E333, H350, and H450 each contribute to the Mn(2+) site.

This sequence belongs to the arabinose isomerase family. In terms of assembly, homohexamer. Mn(2+) is required as a cofactor.

It carries out the reaction beta-L-arabinopyranose = L-ribulose. It participates in carbohydrate degradation; L-arabinose degradation via L-ribulose; D-xylulose 5-phosphate from L-arabinose (bacterial route): step 1/3. Catalyzes the conversion of L-arabinose to L-ribulose. This is L-arabinose isomerase from Salmonella enteritidis PT4 (strain P125109).